We begin with the raw amino-acid sequence, 345 residues long: 3-dehydroquinate synthase (345 aa).

NAD(+) is bound by residues 62–67, 96–100, 120–121, Lys-133, Lys-142, and 160–163; these read DGEEYK, GVISD, TT, and FLKT. Zn(2+)-binding residues include Glu-175, His-233, and His-250.

The protein belongs to the sugar phosphate cyclases superfamily. Dehydroquinate synthase family. Requires Co(2+) as cofactor. It depends on Zn(2+) as a cofactor. The cofactor is NAD(+).

The protein localises to the cytoplasm. The catalysed reaction is 7-phospho-2-dehydro-3-deoxy-D-arabino-heptonate = 3-dehydroquinate + phosphate. It participates in metabolic intermediate biosynthesis; chorismate biosynthesis; chorismate from D-erythrose 4-phosphate and phosphoenolpyruvate: step 2/7. In terms of biological role, catalyzes the conversion of 3-deoxy-D-arabino-heptulosonate 7-phosphate (DAHP) to dehydroquinate (DHQ). The protein is 3-dehydroquinate synthase of Campylobacter concisus (strain 13826).